The primary structure comprises 186 residues: Auxin-responsive protein IAA4 (186 aa).

Residues 18–22 carry the EAR-like (transcriptional repression) motif; that stretch reads LRLGL. Positions 25–62 are disordered; that stretch reads TEETVSCGKSNKRVLPEATEKEIESTGKTETASPPKAQ. Over residues 38–51 the composition is skewed to basic and acidic residues; sequence VLPEATEKEIESTG. A PB1 domain is found at 88–175; that stretch reads GNYVKVSMDG…SCKRLRIMKG (88 aa).

It belongs to the Aux/IAA family. Homodimers and heterodimers. Interacts with TPL. In terms of tissue distribution, preferentially expressed in stems, leaves and flowers.

The protein resides in the nucleus. Its function is as follows. Aux/IAA proteins are short-lived transcriptional factors that function as repressors of early auxin response genes at low auxin concentrations. Repression is thought to result from the interaction with auxin response factors (ARFs), proteins that bind to the auxin-responsive promoter element (AuxRE). Formation of heterodimers with ARF proteins may alter their ability to modulate early auxin response genes expression. In Arabidopsis thaliana (Mouse-ear cress), this protein is Auxin-responsive protein IAA4 (IAA4).